A 436-amino-acid polypeptide reads, in one-letter code: Glutamate-1-semialdehyde 2,1-aminomutase 2 (436 aa).

N6-(pyridoxal phosphate)lysine is present on Lys-271.

The protein belongs to the class-III pyridoxal-phosphate-dependent aminotransferase family. HemL subfamily. In terms of assembly, homodimer. The cofactor is pyridoxal 5'-phosphate.

The protein resides in the cytoplasm. The enzyme catalyses (S)-4-amino-5-oxopentanoate = 5-aminolevulinate. It functions in the pathway porphyrin-containing compound metabolism; protoporphyrin-IX biosynthesis; 5-aminolevulinate from L-glutamyl-tRNA(Glu): step 2/2. This is Glutamate-1-semialdehyde 2,1-aminomutase 2 from Exiguobacterium sibiricum (strain DSM 17290 / CCUG 55495 / CIP 109462 / JCM 13490 / 255-15).